The sequence spans 207 residues: Alpha/beta-tubulin-N-acetyltransferase 9 (207 aa).

In terms of domain architecture, N-acetyltransferase spans 35 to 180; it reads EELQRLTASE…QEVTLRLTVS (146 aa).

Belongs to the acetyltransferase family. GNAT subfamily.

The enzyme catalyses N-terminal L-methionyl-[tubulin] + acetyl-CoA = N-terminal N(alpha)-acetyl-L-methionyl-[tubulin] + CoA + H(+). In terms of biological role, N-acetyltransferase that mediates the acetylation of the N-terminal residues of alpha- and beta-tubulin. This is Alpha/beta-tubulin-N-acetyltransferase 9 (NAT9) from Homo sapiens (Human).